We begin with the raw amino-acid sequence, 747 residues long: Fibroblast growth factor receptor (747 aa).

A signal peptide spans 1–24 (MIQLQNTFIFIALTIFTSASTTSL). At 25–288 (KNETKPLNTI…TEEIPQDTHY (264 aa)) the chain is on the extracellular side. 3 N-linked (GlcNAc...) asparagine glycosylation sites follow: Asn-26, Asn-42, and Asn-63. The interval 47-68 (EEDLFDTNGAPKSDTVNASTTT) is disordered. Ig-like C2-type domains lie at 74-167 (PRWV…YELD) and 175-267 (PPVL…AWLT). Cys-99 and Cys-151 are oxidised to a cystine. N-linked (GlcNAc...) asparagine glycans are attached at residues Asn-161, Asn-185, Asn-217, Asn-227, and Asn-240. Cysteines 198 and 251 form a disulfide. Residues 289-309 (LIYIFGVVCFIILLAFIVYMC) form a helical membrane-spanning segment. Topologically, residues 310–747 (NSRYQNKDPP…NGHARMQSDV (438 aa)) are cytoplasmic. Residues 377-660 (ILLHERIDEG…QLVEDLDRML (284 aa)) form the Protein kinase domain. Residues 383–391 (IDEGFFGQV) and Lys-412 contribute to the ATP site. Catalysis depends on Asp-525, which acts as the Proton acceptor. Tyr-556 is modified (phosphotyrosine; by autocatalysis). The tract at residues 679 to 731 (YLPSDVDSNEDTESRDSANATGEDSDSVFEPIDGHGAHAYEVDEAGPLLNPQP) is disordered. The segment covering 710 to 719 (IDGHGAHAYE) has biased composition (basic and acidic residues).

It belongs to the protein kinase superfamily. Tyr protein kinase family. Fibroblast growth factor receptor subfamily.

It is found in the membrane. It catalyses the reaction L-tyrosyl-[protein] + ATP = O-phospho-L-tyrosyl-[protein] + ADP + H(+). Receptor for basic fibroblast growth factor. In Ciona intestinalis (Transparent sea squirt), this protein is Fibroblast growth factor receptor (FGFR).